The sequence spans 83 residues: Large ribosomal subunit protein eL31 (83 aa).

This sequence belongs to the eukaryotic ribosomal protein eL31 family.

This is Large ribosomal subunit protein eL31 from Methanococcus vannielii (strain ATCC 35089 / DSM 1224 / JCM 13029 / OCM 148 / SB).